The following is a 528-amino-acid chain: GMP synthase [glutamine-hydrolyzing] (528 aa).

In terms of domain architecture, Glutamine amidotransferase type-1 spans 13–204; that stretch reads AIVILDFGSQ…VYDICSCEPD (192 aa). Residue C90 is the Nucleophile of the active site. Residues H178 and E180 contribute to the active site. The GMPS ATP-PPase domain maps to 205-403; sequence WTTNLFIDEA…LGLPDEIVRR (199 aa). 232–238 provides a ligand contact to ATP; that stretch reads SGGVDSS.

In terms of assembly, homodimer.

The catalysed reaction is XMP + L-glutamine + ATP + H2O = GMP + L-glutamate + AMP + diphosphate + 2 H(+). It functions in the pathway purine metabolism; GMP biosynthesis; GMP from XMP (L-Gln route): step 1/1. Its function is as follows. Catalyzes the synthesis of GMP from XMP. This Prochlorococcus marinus (strain NATL1A) protein is GMP synthase [glutamine-hydrolyzing].